The following is a 603-amino-acid chain: Vacuolar protein sorting-associated protein 33A (603 aa).

It belongs to the STXBP/unc-18/SEC1 family. As to quaternary structure, probable component of the homotypic fusion and vacuole protein sorting (HOPS) complex consisting of the core class C Vps proteins vps-11, vps-16, vps-18, and which further associates with vps-33.1, vps-39 and vps-41. Interacts with spe-39. In terms of tissue distribution, ubiquitously expressed at high levels in somatic tissues including the pharynx, muscles, hypodermis, neurons, coelomocytes and spermatheca. Expressed in the intestine.

It is found in the lysosome. It localises to the early endosome. The protein resides in the late endosome. Its subcellular location is the apical cell membrane. Plays a role in vesicle-mediated protein trafficking to lysosomal compartments including the endocytic membrane transport pathways. Believed to act as a component of the putative HOPS endosomal tethering complex which is proposed to be involved in the rab-5-to-rab-7 endosome conversion probably implicating sand-1, and via binding SNAREs and SNARE complexes to mediate tethering and docking events during SNARE-mediated membrane fusion. The HOPS complex is proposed to be recruited to rab-7 on the late endosomal membrane and to regulate late endocytic, phagocytic and autophagic traffic towards lysosomes. Within the HOPS complex, contributes to the normal development of gut granules in embryonic and adult intestinal cells. Required for endosome/lysosome fusion. Required for early embryonic development. The protein is Vacuolar protein sorting-associated protein 33A of Caenorhabditis elegans.